The following is a 136-amino-acid chain: MGKDTIADLLTSIRNADMNKKGTVRVVSTNITENIVKILLREGFIESVRKHQESNRYFLVSTLRHQKRKTRKGIYRTRTFLKRISRPGLRIYANYQGIPKVLGGMGIAILSTSRGIMTDREARLNRIGGEVLCYIW.

This sequence belongs to the universal ribosomal protein uS8 family. In terms of assembly, part of the 30S ribosomal subunit.

The protein localises to the plastid. The protein resides in the chloroplast. Functionally, one of the primary rRNA binding proteins, it binds directly to 16S rRNA central domain where it helps coordinate assembly of the platform of the 30S subunit. This chain is Small ribosomal subunit protein uS8c (rps8), found in Oryza sativa subsp. indica (Rice).